We begin with the raw amino-acid sequence, 287 residues long: Telomere repeat-binding factor 5 (287 aa).

Positions Met1–Thr62 constitute an HTH myb-type domain. A DNA-binding region (H-T-H motif) is located at residues Trp28–Val58. A disordered region spans residues Val58–Leu107. The span at Arg93–Gly103 shows a compositional bias: pro residues. Residues Asn119–Asp193 enclose the H15 domain. A coiled-coil region spans residues Ala233–Lys259.

It belongs to the histone H1/H5 family. SMH subfamily.

The protein resides in the nucleus. It localises to the chromosome. In terms of biological role, binds preferentially double-stranded telomeric repeats. In Arabidopsis thaliana (Mouse-ear cress), this protein is Telomere repeat-binding factor 5.